The primary structure comprises 367 residues: DNA replication and repair protein RecF (367 aa).

Gly30–Thr37 is an ATP binding site.

Belongs to the RecF family.

It localises to the cytoplasm. In terms of biological role, the RecF protein is involved in DNA metabolism; it is required for DNA replication and normal SOS inducibility. RecF binds preferentially to single-stranded, linear DNA. It also seems to bind ATP. The chain is DNA replication and repair protein RecF from Pseudomonas syringae pv. tomato (strain ATCC BAA-871 / DC3000).